Reading from the N-terminus, the 557-residue chain is MPSDIEIARAATLKPIAQVAEKLGIPDEALHNYGKHIAKIDHDFIASLEGKPEGKLVLVTAISPTPAGEGKTTTTVGLGDALNRIGKRAVMCLREPSLGPCFGMKGGAAGGGKAQVVPMEQINLHFTGDFHAITSAHSLAAALIDNHIYWANELNIDVRRIHWRRVVDMNDRALRAINQSLGGVANGFPREDGFDITVASEVMAVFCLAKNLADLEERLGRIVIAETRDRKPVTLADVKATGAMTVLLKDALQPNLVQTLEGNPALIHGGPFANIAHGCNSVIATRTGLRLADYTVTEAGFGADLGAEKFIDIKCRQTGLKPSSVVIVATIRALKMHGGVNKKDLQAENLDALEKGFANLERHVNNVRSFGLPVVVGVNHFFQDTDAEHARLKELCRDRLQVEAITCKHWAEGGAGAEALAQAVVKLAEGEQKPLTFAYETETKITDKIKAIATKLYGAADIQIESKAATKLAGFEKDGYGKLPVCMAKTQYSFSTDPTLMGAPSGHLVSVRDVRLSAGAGFVVVICGEIMTMPGLPKVPAADTIRLDANGQIDGLF.

65–72 (TPAGEGKT) serves as a coordination point for ATP.

Belongs to the formate--tetrahydrofolate ligase family.

The enzyme catalyses (6S)-5,6,7,8-tetrahydrofolate + formate + ATP = (6R)-10-formyltetrahydrofolate + ADP + phosphate. Its pathway is one-carbon metabolism; tetrahydrofolate interconversion. This is Formate--tetrahydrofolate ligase from Methylorubrum extorquens (strain CM4 / NCIMB 13688) (Methylobacterium extorquens).